A 449-amino-acid polypeptide reads, in one-letter code: MRECISIHVGQAGVQIGNACWELYCLEHGIQPDGQMPSDKTIGGGDDSFNTFFSETGAGKHVPRAVFVDLEPTVIDEVRTGTYRQLFHPEQLITGKEDAANNYARGHYTIGKEIIDLVLDRIRKLADQCTGLQGFLVFHSFGGGTGSGFTSLLMERLSVDYGKKSKLEFAIYPAPQVSTAVVEPYNSILTTHTTLEHSDCAFMVDNEAIYDICRRNLDIERPTYTNLNRLISQIVSSITASLRFDGALNVDLTEFQTNLVPYPRIHFPLATYAPVISAEKAYHEQLTVADITNACFEPANQMVKCDPRHGKYMACCLLYRGDVVPKDVNAAIATIKTKRSIQFVDWCPTGFKVGINYQPPTVVPGGDLAKVQRAVCMLSNTTAIAEAWARLDHKFDLMYAKRAFVHWYVGEGMEEGEFSEAREDMAALEKDYEEVGADSADAEDEGEEY.

The short motif at 1–4 (MREC) is the MREC motif element. Gln11 is a GTP binding site. Position 40 is an N6-acetyllysine (Lys40). Positions 71, 140, 144, 145, 179, 206, and 228 each coordinate GTP. Mg(2+) is bound at residue Glu71. Residue Glu254 is part of the active site. Residues 430-449 (KDYEEVGADSADAEDEGEEY) are disordered. The segment covering 431–449 (DYEEVGADSADAEDEGEEY) has biased composition (acidic residues).

The protein belongs to the tubulin family. In terms of assembly, dimer of alpha and beta chains. A typical microtubule is a hollow water-filled tube with an outer diameter of 25 nm and an inner diameter of 15 nM. Alpha-beta heterodimers associate head-to-tail to form protofilaments running lengthwise along the microtubule wall with the beta-tubulin subunit facing the microtubule plus end conferring a structural polarity. Microtubules usually have 13 protofilaments but different protofilament numbers can be found in some organisms and specialized cells. It depends on Mg(2+) as a cofactor. In terms of processing, some glutamate residues at the C-terminus are polyglycylated, resulting in polyglycine chains on the gamma-carboxyl group. Glycylation is mainly limited to tubulin incorporated into axonemes (cilia and flagella) whereas glutamylation is prevalent in neuronal cells, centrioles, axonemes, and the mitotic spindle. Both modifications can coexist on the same protein on adjacent residues, and lowering polyglycylation levels increases polyglutamylation, and reciprocally. The precise function of polyglycylation is still unclear. Post-translationally, some glutamate residues at the C-terminus are polyglutamylated, resulting in polyglutamate chains on the gamma-carboxyl group. Polyglutamylation plays a key role in microtubule severing by spastin (SPAST). SPAST preferentially recognizes and acts on microtubules decorated with short polyglutamate tails: severing activity by SPAST increases as the number of glutamates per tubulin rises from one to eight, but decreases beyond this glutamylation threshold. Acetylation of alpha chains at Lys-40 is located inside the microtubule lumen. This modification has been correlated with increased microtubule stability, intracellular transport and ciliary assembly. In terms of processing, undergoes a tyrosination/detyrosination cycle, the cyclic removal and re-addition of a C-terminal tyrosine residue by the enzymes tubulin tyrosine carboxypeptidase (MATCAP1, VASH1 or VASH2) and tubulin tyrosine ligase (TTL), respectively. Post-translationally, tyrosination promotes microtubule interaction with CAP-Gly microtubule plus-end tracking proteins. Tyrosinated tubulins regulate the initiation of dynein-driven motility. Detyrosination is involved in metaphase plate congression by guiding chromosomes during mitosis. Detyrosination increases microtubules-dependent mechanotransduction in dystrophic cardiac and skeletal muscle. In cardiomyocytes, detyrosinated microtubules are required to resist to contractile compression during contraction.

It localises to the cytoplasm. It is found in the cytoskeleton. It catalyses the reaction GTP + H2O = GDP + phosphate + H(+). Functionally, tubulin is the major constituent of microtubules, a cylinder consisting of laterally associated linear protofilaments composed of alpha- and beta-tubulin heterodimers. Microtubules grow by the addition of GTP-tubulin dimers to the microtubule end, where a stabilizing cap forms. Below the cap, tubulin dimers are in GDP-bound state, owing to GTPase activity of alpha-tubulin. The protein is Tubulin alpha chain (tuba) of Xenopus laevis (African clawed frog).